A 97-amino-acid polypeptide reads, in one-letter code: ATP-dependent Clp protease adapter protein ClpS (97 aa).

It belongs to the ClpS family. Binds to the N-terminal domain of the chaperone ClpA.

Its function is as follows. Involved in the modulation of the specificity of the ClpAP-mediated ATP-dependent protein degradation. This Nostoc sp. (strain PCC 7120 / SAG 25.82 / UTEX 2576) protein is ATP-dependent Clp protease adapter protein ClpS.